Here is a 367-residue protein sequence, read N- to C-terminus: Queuine tRNA-ribosyltransferase (367 aa).

Asp-92 acts as the Proton acceptor in catalysis. Residues 92 to 96, Asp-146, Gln-188, and Gly-215 contribute to the substrate site; that span reads DSGGF. Residues 246–252 are RNA binding; the sequence is GVGTPKD. Asp-265 acts as the Nucleophile in catalysis. Residues Cys-303, Cys-305, Cys-308, and His-334 each contribute to the Zn(2+) site.

It belongs to the queuine tRNA-ribosyltransferase family. In terms of assembly, homodimer. Within each dimer, one monomer is responsible for RNA recognition and catalysis, while the other monomer binds to the replacement base PreQ1. Zn(2+) is required as a cofactor.

The enzyme catalyses 7-aminomethyl-7-carbaguanine + guanosine(34) in tRNA = 7-aminomethyl-7-carbaguanosine(34) in tRNA + guanine. Its pathway is tRNA modification; tRNA-queuosine biosynthesis. Catalyzes the base-exchange of a guanine (G) residue with the queuine precursor 7-aminomethyl-7-deazaguanine (PreQ1) at position 34 (anticodon wobble position) in tRNAs with GU(N) anticodons (tRNA-Asp, -Asn, -His and -Tyr). Catalysis occurs through a double-displacement mechanism. The nucleophile active site attacks the C1' of nucleotide 34 to detach the guanine base from the RNA, forming a covalent enzyme-RNA intermediate. The proton acceptor active site deprotonates the incoming PreQ1, allowing a nucleophilic attack on the C1' of the ribose to form the product. After dissociation, two additional enzymatic reactions on the tRNA convert PreQ1 to queuine (Q), resulting in the hypermodified nucleoside queuosine (7-(((4,5-cis-dihydroxy-2-cyclopenten-1-yl)amino)methyl)-7-deazaguanosine). In Francisella tularensis subsp. tularensis (strain FSC 198), this protein is Queuine tRNA-ribosyltransferase.